A 956-amino-acid chain; its full sequence is Plasma membrane ATPase 3 (956 aa).

The Cytoplasmic portion of the chain corresponds to 1–65 (MGEKPEVLDA…EKKESKFSKF (65 aa)). A helical membrane pass occupies residues 66 to 85 (LGFMWNPLSWVMEAAAIMAI). Residues 86 to 97 (ALANGGGKPPDW) are Extracellular-facing. The helical transmembrane segment at 98-118 (QDFVGIITLLIINSTISFIEE) threads the bilayer. The Cytoplasmic portion of the chain corresponds to 119-247 (NNAGNAAAAL…GHFQKVLTAI (129 aa)). A helical membrane pass occupies residues 248 to 268 (GNFCICSIAVGMIIEIIVMYP). Topologically, residues 269-278 (IQHRKYRPGI) are extracellular. A helical transmembrane segment spans residues 279–300 (DNLLVLLIGGIPIAMPTVLSVT). The Cytoplasmic portion of the chain corresponds to 301-647 (MAIGSHRLAQ…TSRAIFQRMK (347 aa)). The 4-aspartylphosphate intermediate role is filled by aspartate 333. Positions 592 and 596 each coordinate Mg(2+). The helical transmembrane segment at 648-669 (NYTIYAVSITIRIVLGFMLLAL) threads the bilayer. The Extracellular segment spans residues 670–674 (IWQFD). A helical transmembrane segment spans residues 675–697 (FPPFMVLIIAILNDGTIMTISKD). The Cytoplasmic portion of the chain corresponds to 698–713 (RVKPSPLPDSWKLAEI). The chain crosses the membrane as a helical span at residues 714–734 (FTTGVVLGGYLAMMTVIFFWA). Over 735–759 (AYKTNFFPRVFGVSTLEKTATDDFR) the chain is Extracellular. A helical membrane pass occupies residues 760–780 (KLASAIYLQVSTISQALIFVT). Over 781–792 (RSRSWSFMERPG) the chain is Cytoplasmic. Residues 793–813 (LLLVVAFFIAQLVATLIAVYA) traverse the membrane as a helical segment. Topologically, residues 814-822 (NWSFAAIEG) are extracellular. A helical transmembrane segment spans residues 823 to 843 (IGWGWAGVIWLYNIVFYIPLD). Residues 844-956 (LXXFLIRYAL…IETIQQAYTV (113 aa)) lie on the Cytoplasmic side of the membrane.

The protein belongs to the cation transport ATPase (P-type) (TC 3.A.3) family. Type IIIA subfamily. Expressed in roots, stems, leaves from both vegetative and flowering plants, and flowers at early and late stages of development with highest expression levels found in flowers and root tissue.

The protein resides in the cell membrane. The enzyme catalyses ATP + H2O + H(+)(in) = ADP + phosphate + 2 H(+)(out). Its function is as follows. The plasma membrane ATPase of plants and fungi is a hydrogen ion pump. The proton gradient it generates drives the active transport of nutrients by H(+)-symport. The resulting external acidification and/or internal alkinization may mediate growth responses. This is Plasma membrane ATPase 3 (PMA3) from Nicotiana plumbaginifolia (Leadwort-leaved tobacco).